Consider the following 127-residue polypeptide: Stationary phase protein 3 (127 aa).

Transmembrane regions (helical) follow at residues 29–49 (LFLF…FYVI) and 63–83 (ANSI…CFFL). N-linked (GlcNAc...) asparagine glycosylation is present at Asn86.

The protein localises to the membrane. Functionally, required for survival during stationary phase. In Saccharomyces cerevisiae (strain ATCC 204508 / S288c) (Baker's yeast), this protein is Stationary phase protein 3 (SPG3).